Reading from the N-terminus, the 339-residue chain is Biotin synthase (339 aa).

Positions 55–288 (LSEGALHSCS…GKIIKFAAGR (234 aa)) constitute a Radical SAM core domain. [4Fe-4S] cluster contacts are provided by Cys73, Cys77, and Cys80. 3 residues coordinate [2Fe-2S] cluster: Cys152, Cys213, and Lys283.

This sequence belongs to the radical SAM superfamily. Biotin synthase family. Homodimer. The cofactor is [4Fe-4S] cluster. It depends on [2Fe-2S] cluster as a cofactor.

It carries out the reaction (4R,5S)-dethiobiotin + (sulfur carrier)-SH + 2 reduced [2Fe-2S]-[ferredoxin] + 2 S-adenosyl-L-methionine = (sulfur carrier)-H + biotin + 2 5'-deoxyadenosine + 2 L-methionine + 2 oxidized [2Fe-2S]-[ferredoxin]. The protein operates within cofactor biosynthesis; biotin biosynthesis; biotin from 7,8-diaminononanoate: step 2/2. Its function is as follows. Catalyzes the conversion of dethiobiotin (DTB) to biotin by the insertion of a sulfur atom into dethiobiotin via a radical-based mechanism. This chain is Biotin synthase, found in Chlorobium phaeobacteroides (strain BS1).